A 304-amino-acid chain; its full sequence is MSWIERIKSNITPTRKASIPEGVWTKCDSCGQVLYRAELERNLEVCPKCDHHMRMTARNRLHSLLDEGSLVELGSELEPKDVLKFRDSKKYKDRLASAQKETGEKDALVVMKGTLYGMPVVAAAFEFAFMGGSMGSVVGARFVRAVEQALEDNCPLICFSASGGARMQEALMSLMQMAKTSAALAKMQERGLPYISVLTDPTMGGVSASFAMLGDLNIAEPKALIGFAGPRVIEQTVREKLPPGFQRSEFLIEKGAIDMIVHRPEMRLKLASILAKLMNLPAPNPEAPREGVVVPPVPDQEPEA.

Residues 23-292 form the CoA carboxyltransferase N-terminal domain; the sequence is VWTKCDSCGQ…PNPEAPREGV (270 aa). Zn(2+) contacts are provided by cysteine 27, cysteine 30, cysteine 46, and cysteine 49. The C4-type zinc-finger motif lies at 27–49; sequence CDSCGQVLYRAELERNLEVCPKC. The segment at 285–304 is disordered; sequence PEAPREGVVVPPVPDQEPEA. The segment covering 295–304 has biased composition (pro residues); that stretch reads PPVPDQEPEA.

Belongs to the AccD/PCCB family. In terms of assembly, acetyl-CoA carboxylase is a heterohexamer composed of biotin carboxyl carrier protein (AccB), biotin carboxylase (AccC) and two subunits each of ACCase subunit alpha (AccA) and ACCase subunit beta (AccD). Zn(2+) serves as cofactor.

The protein resides in the cytoplasm. It carries out the reaction N(6)-carboxybiotinyl-L-lysyl-[protein] + acetyl-CoA = N(6)-biotinyl-L-lysyl-[protein] + malonyl-CoA. Its pathway is lipid metabolism; malonyl-CoA biosynthesis; malonyl-CoA from acetyl-CoA: step 1/1. Functionally, component of the acetyl coenzyme A carboxylase (ACC) complex. Biotin carboxylase (BC) catalyzes the carboxylation of biotin on its carrier protein (BCCP) and then the CO(2) group is transferred by the transcarboxylase to acetyl-CoA to form malonyl-CoA. This is Acetyl-coenzyme A carboxylase carboxyl transferase subunit beta from Shigella sonnei (strain Ss046).